The following is a 20-amino-acid chain: Thylakoid lumenal 18.4 kDa protein (20 aa).

It is found in the plastid. It localises to the chloroplast thylakoid lumen. The sequence is that of Thylakoid lumenal 18.4 kDa protein from Spinacia oleracea (Spinach).